Consider the following 249-residue polypeptide: 5-oxoprolinase subunit A (249 aa).

The protein belongs to the LamB/PxpA family. Forms a complex composed of PxpA, PxpB and PxpC.

The enzyme catalyses 5-oxo-L-proline + ATP + 2 H2O = L-glutamate + ADP + phosphate + H(+). Functionally, catalyzes the cleavage of 5-oxoproline to form L-glutamate coupled to the hydrolysis of ATP to ADP and inorganic phosphate. In Limosilactobacillus fermentum (strain NBRC 3956 / LMG 18251) (Lactobacillus fermentum), this protein is 5-oxoprolinase subunit A.